Consider the following 233-residue polypeptide: Orotidine 5'-phosphate decarboxylase (233 aa).

Substrate is bound by residues D11, K34, 61–70, T117, R179, Q188, G208, and R209; that span reads DLKLHDIPNT. The active-site Proton donor is K63.

This sequence belongs to the OMP decarboxylase family. Type 1 subfamily. In terms of assembly, homodimer.

It carries out the reaction orotidine 5'-phosphate + H(+) = UMP + CO2. Its pathway is pyrimidine metabolism; UMP biosynthesis via de novo pathway; UMP from orotate: step 2/2. Catalyzes the decarboxylation of orotidine 5'-monophosphate (OMP) to uridine 5'-monophosphate (UMP). The protein is Orotidine 5'-phosphate decarboxylase of Streptococcus pneumoniae (strain CGSP14).